The sequence spans 509 residues: Maturase K (509 aa).

The protein belongs to the intron maturase 2 family. MatK subfamily.

The protein localises to the plastid. It is found in the chloroplast. Usually encoded in the trnK tRNA gene intron. Probably assists in splicing its own and other chloroplast group II introns. The protein is Maturase K of Banksia cuneata (Quairading banksia).